The chain runs to 438 residues: GDP-mannose 6-dehydrogenase (438 aa).

The NAD(+) site is built by Tyr-10, Val-11, Asp-30, Lys-35, Thr-86, and Thr-124. GDP-alpha-D-mannuronate contacts are provided by Glu-161, Lys-210, Asn-214, His-217, Asn-225, Tyr-256, Tyr-257, Arg-259, Phe-262, and Gly-265. Residue Cys-268 is part of the active site. Lys-271 is a binding site for NAD(+). Residue Lys-324 participates in GDP-alpha-D-mannuronate binding. Arg-331 is a binding site for NAD(+).

It belongs to the UDP-glucose/GDP-mannose dehydrogenase family.

It catalyses the reaction GDP-alpha-D-mannose + 2 NAD(+) + H2O = GDP-alpha-D-mannuronate + 2 NADH + 3 H(+). The protein operates within glycan biosynthesis; alginate biosynthesis. Catalyzes the oxidation of guanosine diphospho-D-mannose (GDP-D-mannose) to GDP-D-mannuronic acid, a precursor for alginate polymerization. The alginate layer causes a mucoid phenotype and provides a protective barrier against host immune defenses and antibiotics. The polypeptide is GDP-mannose 6-dehydrogenase (algD) (Pseudomonas syringae pv. tomato (strain ATCC BAA-871 / DC3000)).